The following is a 96-amino-acid chain: Transcription and mRNA export factor SUS1 (96 aa).

K68 is covalently cross-linked (Glycyl lysine isopeptide (Lys-Gly) (interchain with G-Cter in ubiquitin)).

Belongs to the ENY2 family. As to quaternary structure, component of the nuclear pore complex (NPC)-associated TREX-2 complex (transcription and export complex 2), composed of at least SUS1, SAC3, THP1, SEM1, and CDC31. TREX-2 contains 2 SUS1 chains. The TREX-2 complex interacts with the nucleoporin NUP1. Component of the 1.8 MDa SAGA transcription coactivator-HAT complex. SAGA is built of 5 distinct domains with specialized functions. Within the SAGA complex, SUS1, SGF11, SGF73 and UBP8 form an additional subcomplex of SAGA called the DUB module (deubiquitination module). Interacts directly with THP1, SAC3, SGF11, and with the RNA polymerase II.

It localises to the nucleus. Its subcellular location is the nucleoplasm. It is found in the cytoplasm. The protein localises to the P-body. Its function is as follows. Involved in mRNA export coupled transcription activation by association with both the TREX-2 and the SAGA complexes. At the promoters, SAGA is required for recruitment of the basal transcription machinery. It influences RNA polymerase II transcriptional activity through different activities such as TBP interaction and promoter selectivity, interaction with transcription activators, and chromatin modification through histone acetylation and deubiquitination. Within the SAGA complex, participates in a subcomplex required for deubiquitination of H2B and for the maintenance of steady-state H3 methylation levels. The TREX-2 complex functions in docking export-competent ribonucleoprotein particles (mRNPs) to the nuclear entrance of the nuclear pore complex (nuclear basket). TREX-2 participates in mRNA export and accurate chromatin positioning in the nucleus by tethering genes to the nuclear periphery. May also be involved in cytoplasmic mRNA decay by interaction with components of P-bodies. This Saccharomyces cerevisiae (strain YJM789) (Baker's yeast) protein is Transcription and mRNA export factor SUS1.